We begin with the raw amino-acid sequence, 108 residues long: Phosphoribosyl-AMP cyclohydrolase (108 aa).

D78 contributes to the Mg(2+) binding site. C79 provides a ligand contact to Zn(2+). Mg(2+)-binding residues include D80 and D82. Positions 95 and 102 each coordinate Zn(2+).

It belongs to the PRA-CH family. As to quaternary structure, homodimer. It depends on Mg(2+) as a cofactor. Zn(2+) is required as a cofactor.

It localises to the cytoplasm. The enzyme catalyses 1-(5-phospho-beta-D-ribosyl)-5'-AMP + H2O = 1-(5-phospho-beta-D-ribosyl)-5-[(5-phospho-beta-D-ribosylamino)methylideneamino]imidazole-4-carboxamide. It functions in the pathway amino-acid biosynthesis; L-histidine biosynthesis; L-histidine from 5-phospho-alpha-D-ribose 1-diphosphate: step 3/9. Its function is as follows. Catalyzes the hydrolysis of the adenine ring of phosphoribosyl-AMP. In Nitrosopumilus maritimus (strain SCM1), this protein is Phosphoribosyl-AMP cyclohydrolase.